The sequence spans 440 residues: Thymidine phosphorylase (440 aa).

It belongs to the thymidine/pyrimidine-nucleoside phosphorylase family. Homodimer.

It carries out the reaction thymidine + phosphate = 2-deoxy-alpha-D-ribose 1-phosphate + thymine. It functions in the pathway pyrimidine metabolism; dTMP biosynthesis via salvage pathway; dTMP from thymine: step 1/2. Its function is as follows. The enzymes which catalyze the reversible phosphorolysis of pyrimidine nucleosides are involved in the degradation of these compounds and in their utilization as carbon and energy sources, or in the rescue of pyrimidine bases for nucleotide synthesis. The polypeptide is Thymidine phosphorylase (Rhizobium meliloti (strain 1021) (Ensifer meliloti)).